A 308-amino-acid polypeptide reads, in one-letter code: Methionine synthase (308 aa).

Residues His-201, Cys-203, Glu-224, and Cys-285 each coordinate Zn(2+).

It belongs to the archaeal MetE family. Requires Zn(2+) as cofactor.

Its pathway is amino-acid biosynthesis; L-methionine biosynthesis via de novo pathway. In terms of biological role, catalyzes the transfer of a methyl group to L-homocysteine resulting in methionine formation. Can use methylcobalamin and methylcobinamide as methyl donors, but methylcobalamin is not considered to be the physiological substrate. The sequence is that of Methionine synthase from Methanothermobacter thermautotrophicus (strain ATCC 29096 / DSM 1053 / JCM 10044 / NBRC 100330 / Delta H) (Methanobacterium thermoautotrophicum).